The following is a 217-amino-acid chain: Large ribosomal subunit protein uL3 (217 aa).

It belongs to the universal ribosomal protein uL3 family. In terms of assembly, part of the 50S ribosomal subunit. Forms a cluster with proteins L14 and L19.

Functionally, one of the primary rRNA binding proteins, it binds directly near the 3'-end of the 23S rRNA, where it nucleates assembly of the 50S subunit. This chain is Large ribosomal subunit protein uL3, found in Mycolicibacterium paratuberculosis (strain ATCC BAA-968 / K-10) (Mycobacterium paratuberculosis).